The sequence spans 298 residues: Ketohexokinase (298 aa).

The beta-D-fructose site is built by D15, G41, N42, and N45. ATP is bound by residues R108, 226 to 229 (AEEG), and 255 to 258 (GAGD). D258 is a beta-D-fructose binding site.

The protein belongs to the carbohydrate kinase PfkB family. As to quaternary structure, homodimer.

It catalyses the reaction beta-D-fructose + ATP = beta-D-fructose 1-phosphate + ADP + H(+). Its pathway is carbohydrate metabolism; fructose metabolism. With respect to regulation, requires potassium. Inhibition by ADP. Functionally, catalyzes the phosphorylation of the ketose sugar fructose to fructose-1-phosphate. In Mus musculus (Mouse), this protein is Ketohexokinase.